A 198-amino-acid polypeptide reads, in one-letter code: Nucleoside triphosphate pyrophosphatase (198 aa).

Catalysis depends on D75, which acts as the Proton acceptor.

It belongs to the Maf family. A divalent metal cation is required as a cofactor.

It localises to the cytoplasm. It catalyses the reaction a ribonucleoside 5'-triphosphate + H2O = a ribonucleoside 5'-phosphate + diphosphate + H(+). The enzyme catalyses a 2'-deoxyribonucleoside 5'-triphosphate + H2O = a 2'-deoxyribonucleoside 5'-phosphate + diphosphate + H(+). In terms of biological role, nucleoside triphosphate pyrophosphatase. May have a dual role in cell division arrest and in preventing the incorporation of modified nucleotides into cellular nucleic acids. This is Nucleoside triphosphate pyrophosphatase from Hyphomonas neptunium (strain ATCC 15444).